Here is a 245-residue protein sequence, read N- to C-terminus: 2,3-bisphosphoglycerate-dependent phosphoglycerate mutase (245 aa).

Substrate is bound by residues 8–15 (RHGQSLWN), 21–22 (TG), arginine 60, 87–90 (ERHY), lysine 98, 114–115 (RR), and 183–184 (GN). The active-site Tele-phosphohistidine intermediate is histidine 9. Glutamate 87 serves as the catalytic Proton donor/acceptor.

It belongs to the phosphoglycerate mutase family. BPG-dependent PGAM subfamily.

The catalysed reaction is (2R)-2-phosphoglycerate = (2R)-3-phosphoglycerate. It participates in carbohydrate degradation; glycolysis; pyruvate from D-glyceraldehyde 3-phosphate: step 3/5. Functionally, catalyzes the interconversion of 2-phosphoglycerate and 3-phosphoglycerate. The polypeptide is 2,3-bisphosphoglycerate-dependent phosphoglycerate mutase (Bacillus cytotoxicus (strain DSM 22905 / CIP 110041 / 391-98 / NVH 391-98)).